Reading from the N-terminus, the 135-residue chain is RxLR effector protein PITG_02860 (135 aa).

An N-terminal signal peptide occupies residues 1–18; that stretch reads MRLAFLLLAVSHFICGNA. The RxLR-dEER signature appears at 48 to 64; the sequence is RKLLRTDERLSEANEER. The tract at residues 126 to 135 is NRL1-binding domain; sequence LKDPQAFRGP.

Belongs to the RxLR effector family. As to quaternary structure, interacts with host ubiquitin E3 ligase NRL1.

The protein localises to the secreted. It is found in the host cytoplasm. The protein resides in the host nucleus. It localises to the host nucleoplasm. Functionally, effector that promotes P.infestans virulence and suppresses pattern-triggered immunity (PTI). Interacts with the host ubiquitin E3 ligase NRL1 and enhances the association between NRL1 and SWAP70 to promote proteasome-mediated degradation of SWAP70, which results in the suppression of immunity. In Phytophthora infestans (strain T30-4) (Potato late blight agent), this protein is RxLR effector protein PITG_02860.